We begin with the raw amino-acid sequence, 145 residues long: Large ribosomal subunit protein uL16 (145 aa).

The protein belongs to the universal ribosomal protein uL16 family. As to quaternary structure, part of the 50S ribosomal subunit.

In terms of biological role, binds 23S rRNA and is also seen to make contacts with the A and possibly P site tRNAs. The polypeptide is Large ribosomal subunit protein uL16 (Lactobacillus johnsonii (strain CNCM I-12250 / La1 / NCC 533)).